The chain runs to 185 residues: Small ribosomal subunit protein uS5c (185 aa).

In terms of domain architecture, S5 DRBM spans 26–89; the sequence is FVERLIKISR…ADGRKNLIKI (64 aa).

It belongs to the universal ribosomal protein uS5 family. Part of the 30S ribosomal subunit. Contacts protein S4.

It is found in the plastid. Its subcellular location is the chloroplast. Its function is as follows. With S4 and S12 plays an important role in translational accuracy. The protein is Small ribosomal subunit protein uS5c (rps5) of Trieres chinensis (Marine centric diatom).